The chain runs to 345 residues: Beta-2-glycoprotein 1 (345 aa).

An N-terminal signal peptide occupies residues M1–A19. Sushi domains lie at R21–P81, R82–P139, I140–E202, and V203–A262. Disulfide bonds link C23/C66, C51/C79, C84/C124, C110/C137, C142/C188, C174/C200, C205/C248, C234/C260, C264/C315, C300/C325, and C307/C345. The O-linked (GalNAc...) threonine glycan is linked to T33. A glycan (O-linked (GalNAc...) threonine) is linked at T149. N-linked (GlcNAc...) asparagine glycans are attached at residues N162, N183, and N193. N253 is a glycosylation site (N-linked (GlcNAc...) asparagine). A sushi-like region spans residues S263 to C345.

Expressed by the liver and secreted in plasma.

The protein localises to the secreted. Its function is as follows. Binds to various kinds of negatively charged substances such as heparin, phospholipids, and dextran sulfate. May prevent activation of the intrinsic blood coagulation cascade by binding to phospholipids on the surface of damaged cells. The sequence is that of Beta-2-glycoprotein 1 (APOH) from Pan troglodytes (Chimpanzee).